Here is a 345-residue protein sequence, read N- to C-terminus: Quinolinate synthase (345 aa).

Iminosuccinate contacts are provided by His-69 and Ser-87. Cys-132 contacts [4Fe-4S] cluster. Iminosuccinate is bound by residues 158–160 (YVN) and Ser-175. Position 217 (Cys-217) interacts with [4Fe-4S] cluster. Residues 243 to 245 (HPE) and Thr-260 each bind iminosuccinate. Cys-303 lines the [4Fe-4S] cluster pocket.

This sequence belongs to the quinolinate synthase family. Type 2 subfamily. The cofactor is [4Fe-4S] cluster.

It localises to the cytoplasm. It catalyses the reaction iminosuccinate + dihydroxyacetone phosphate = quinolinate + phosphate + 2 H2O + H(+). It functions in the pathway cofactor biosynthesis; NAD(+) biosynthesis; quinolinate from iminoaspartate: step 1/1. In terms of biological role, catalyzes the condensation of iminoaspartate with dihydroxyacetone phosphate to form quinolinate. This chain is Quinolinate synthase, found in Agrobacterium fabrum (strain C58 / ATCC 33970) (Agrobacterium tumefaciens (strain C58)).